Reading from the N-terminus, the 400-residue chain is Flavo-diiron protein FprA2 (400 aa).

Residues 32 to 216 form a zinc metallo-hydrolase region; that stretch reads GTSYNAYLIK…VVKGLDILDA (185 aa). Positions 79, 81, 83, 147, 166, and 226 each coordinate Fe cation. The 141-residue stretch at 257–397 folds into the Flavodoxin-like domain; it reads IPIFYCSAYG…KAFKFGEDFA (141 aa). FMN contacts are provided by residues 263–267 and 345–372; these read SAYGN and AFGS…KVFQ.

It in the N-terminal section; belongs to the zinc metallo-hydrolase group 3 family. Homotetramer. FMN serves as cofactor. Requires Fe cation as cofactor.

The catalysed reaction is 2 NADH + O2 + 2 H(+) = 2 NAD(+) + 2 H2O. In terms of biological role, catalyzes the four-electron reduction of molecular oxygen to water. In fact, functions as the terminal component of an NADH oxidase (NADH:O(2) oxidoreductase) when using NADH:rubredoxin oxidoreductase (NROR) and rubredoxin (Rd) as electron transport intermediaries between NADH and FDP. Is thus able to reductively scavenge intracellular dioxygen and is part of an oxidative stress defense system in C.acetobutylicum, an obligate anaerobic bacterium. Can also serve as the terminal component of an NADH:nitric oxide oxidoreductase (NOR) with a catalytic efficiency comparable to that of its NADH oxidase activity, and therefore might have an in vivo role in scavenging nitric oxide. In Clostridium acetobutylicum (strain ATCC 824 / DSM 792 / JCM 1419 / IAM 19013 / LMG 5710 / NBRC 13948 / NRRL B-527 / VKM B-1787 / 2291 / W), this protein is Flavo-diiron protein FprA2 (fprA2).